The chain runs to 207 residues: Large ribosomal subunit protein uL4 (207 aa).

It belongs to the universal ribosomal protein uL4 family. In terms of assembly, part of the 50S ribosomal subunit.

Functionally, one of the primary rRNA binding proteins, this protein initially binds near the 5'-end of the 23S rRNA. It is important during the early stages of 50S assembly. It makes multiple contacts with different domains of the 23S rRNA in the assembled 50S subunit and ribosome. In terms of biological role, forms part of the polypeptide exit tunnel. The protein is Large ribosomal subunit protein uL4 of Rickettsia conorii (strain ATCC VR-613 / Malish 7).